A 211-amino-acid polypeptide reads, in one-letter code: Small ribosomal subunit protein uS4 (211 aa).

A disordered region spans residues G27–R48. The S4 RNA-binding domain occupies R99–E162.

It belongs to the universal ribosomal protein uS4 family. Part of the 30S ribosomal subunit. Contacts protein S5. The interaction surface between S4 and S5 is involved in control of translational fidelity.

One of the primary rRNA binding proteins, it binds directly to 16S rRNA where it nucleates assembly of the body of the 30S subunit. Functionally, with S5 and S12 plays an important role in translational accuracy. This chain is Small ribosomal subunit protein uS4, found in Herpetosiphon aurantiacus (strain ATCC 23779 / DSM 785 / 114-95).